The following is a 574-amino-acid chain: Hyaluronan synthase 3 (574 aa).

Residues Met-1 to Ser-15 lie on the Cytoplasmic side of the membrane. The chain crosses the membrane as a helical span at residues Leu-16 to Ile-36. Over His-37–Ser-44 the chain is Extracellular. The chain crosses the membrane as a helical span at residues Phe-45–Leu-65. At Glu-66 to Leu-398 the chain is on the cytoplasmic side. A helical transmembrane segment spans residues Trp-399 to Ile-419. Residues Gln-420–Asn-429 are Extracellular-facing. The helical transmembrane segment at Ile-430 to Phe-450 threads the bilayer. The Cytoplasmic portion of the chain corresponds to Leu-451–Glu-456. A helical membrane pass occupies residues Met-457 to Phe-477. Residues Ala-478–Thr-494 are Extracellular-facing. Residues Ile-495–Gly-515 traverse the membrane as a helical segment. At Leu-516–Glu-530 the chain is on the cytoplasmic side. Residues Val-531–Leu-551 traverse the membrane as a helical segment. Over Tyr-552–Val-574 the chain is Extracellular.

Belongs to the NodC/HAS family. Requires Mg(2+) as cofactor. O-GlcNAcylation increases the hyaluronan synthase activity, HAS3 stability and its plasma membrane residence. The concentration of UDP-GlcNAc controls the level of O-GlcNAc modification.

The protein localises to the cell membrane. The protein resides in the golgi apparatus membrane. It is found in the golgi apparatus. It localises to the trans-Golgi network membrane. Its subcellular location is the cytoplasmic vesicle. The catalysed reaction is [hyaluronan](n) + UDP-N-acetyl-alpha-D-glucosamine = N-acetyl-beta-D-glucosaminyl-(1-&gt;4)-[hyaluronan](n) + UDP + H(+). It carries out the reaction N-acetyl-beta-D-glucosaminyl-(1-&gt;4)-[hyaluronan](n) + UDP-alpha-D-glucuronate = [hyaluronan](n+1) + UDP + H(+). It functions in the pathway glycan biosynthesis; hyaluronan biosynthesis. Catalyzes the addition of GlcNAc or GlcUA monosaccharides to the nascent hyaluronan polymer. Therefore, it is essential to hyaluronan synthesis a major component of most extracellular matrices that has a structural role in tissues architectures and regulates cell adhesion, migration and differentiation. This is one of three isoenzymes responsible for cellular hyaluronan synthesis. In Gallus gallus (Chicken), this protein is Hyaluronan synthase 3 (HAS3).